The following is a 267-amino-acid chain: 3-methyl-2-oxobutanoate hydroxymethyltransferase (267 aa).

Mg(2+) contacts are provided by aspartate 45 and aspartate 84. Residues 45 to 46 (DS), aspartate 84, and lysine 113 each bind 3-methyl-2-oxobutanoate. Glutamate 115 provides a ligand contact to Mg(2+). Glutamate 182 acts as the Proton acceptor in catalysis.

This sequence belongs to the PanB family. As to quaternary structure, homodecamer; pentamer of dimers. Mg(2+) serves as cofactor.

It is found in the cytoplasm. The catalysed reaction is 3-methyl-2-oxobutanoate + (6R)-5,10-methylene-5,6,7,8-tetrahydrofolate + H2O = 2-dehydropantoate + (6S)-5,6,7,8-tetrahydrofolate. The protein operates within cofactor biosynthesis; coenzyme A biosynthesis. In terms of biological role, catalyzes the reversible reaction in which hydroxymethyl group from 5,10-methylenetetrahydrofolate is transferred onto alpha-ketoisovalerate to form ketopantoate. This Saccharolobus islandicus (strain Y.N.15.51 / Yellowstone #2) (Sulfolobus islandicus) protein is 3-methyl-2-oxobutanoate hydroxymethyltransferase.